The primary structure comprises 456 residues: Bifunctional protein GlmU (456 aa).

The segment at 1–230 is pyrophosphorylase; it reads MDKRFAVILA…FQETLGVNDR (230 aa). UDP-N-acetyl-alpha-D-glucosamine is bound by residues 9-12, Lys-23, Gln-73, and 78-79; these read LAAG and GT. Asp-103 lines the Mg(2+) pocket. 4 residues coordinate UDP-N-acetyl-alpha-D-glucosamine: Gly-140, Glu-155, Asn-170, and Asn-228. Asn-228 is a binding site for Mg(2+). The linker stretch occupies residues 231–251; the sequence is VALSQAEMYMKERINKRHMQN. The tract at residues 252 to 456 is N-acetyltransferase; the sequence is GVTLIDPMNT…EDYVKNIHKK (205 aa). UDP-N-acetyl-alpha-D-glucosamine is bound by residues Arg-333 and Lys-351. His-363 (proton acceptor) is an active-site residue. UDP-N-acetyl-alpha-D-glucosamine is bound by residues Tyr-366 and Asn-377. Residues 386–387, Ala-423, and Arg-440 each bind acetyl-CoA; that span reads NY.

The protein in the N-terminal section; belongs to the N-acetylglucosamine-1-phosphate uridyltransferase family. In the C-terminal section; belongs to the transferase hexapeptide repeat family. Homotrimer. The cofactor is Mg(2+).

It is found in the cytoplasm. It carries out the reaction alpha-D-glucosamine 1-phosphate + acetyl-CoA = N-acetyl-alpha-D-glucosamine 1-phosphate + CoA + H(+). The catalysed reaction is N-acetyl-alpha-D-glucosamine 1-phosphate + UTP + H(+) = UDP-N-acetyl-alpha-D-glucosamine + diphosphate. Its pathway is nucleotide-sugar biosynthesis; UDP-N-acetyl-alpha-D-glucosamine biosynthesis; N-acetyl-alpha-D-glucosamine 1-phosphate from alpha-D-glucosamine 6-phosphate (route II): step 2/2. It participates in nucleotide-sugar biosynthesis; UDP-N-acetyl-alpha-D-glucosamine biosynthesis; UDP-N-acetyl-alpha-D-glucosamine from N-acetyl-alpha-D-glucosamine 1-phosphate: step 1/1. The protein operates within bacterial outer membrane biogenesis; LPS lipid A biosynthesis. Catalyzes the last two sequential reactions in the de novo biosynthetic pathway for UDP-N-acetylglucosamine (UDP-GlcNAc). The C-terminal domain catalyzes the transfer of acetyl group from acetyl coenzyme A to glucosamine-1-phosphate (GlcN-1-P) to produce N-acetylglucosamine-1-phosphate (GlcNAc-1-P), which is converted into UDP-GlcNAc by the transfer of uridine 5-monophosphate (from uridine 5-triphosphate), a reaction catalyzed by the N-terminal domain. In Bacillus velezensis (strain DSM 23117 / BGSC 10A6 / LMG 26770 / FZB42) (Bacillus amyloliquefaciens subsp. plantarum), this protein is Bifunctional protein GlmU.